Reading from the N-terminus, the 340-residue chain is Photosystem II protein D1 (340 aa).

3 helical membrane-spanning segments follow: residues Y25–V42, H114–F129, and W138–A152. Residue H114 participates in chlorophyll a binding. W122 serves as a coordination point for pheophytin a. [CaMn4O5] cluster contacts are provided by D166 and E185. The chain crosses the membrane as a helical span at residues F193–L214. H194 is a binding site for chlorophyll a. A quinone-binding positions include H211 and S260–F261. Fe cation is bound at residue H211. H268 is a binding site for Fe cation. The chain crosses the membrane as a helical span at residues F270–L284. [CaMn4O5] cluster contacts are provided by H328, E329, D338, and A340.

Belongs to the reaction center PufL/M/PsbA/D family. In terms of assembly, PSII is composed of 1 copy each of membrane proteins PsbA, PsbB, PsbC, PsbD, PsbE, PsbF, PsbH, PsbI, PsbJ, PsbK, PsbL, PsbM, PsbT, PsbX, PsbY, PsbZ, Psb30/Ycf12, at least 3 peripheral proteins of the oxygen-evolving complex and a large number of cofactors. It forms dimeric complexes. It depends on The D1/D2 heterodimer binds P680, chlorophylls that are the primary electron donor of PSII, and subsequent electron acceptors. It shares a non-heme iron and each subunit binds pheophytin, quinone, additional chlorophylls, carotenoids and lipids. D1 provides most of the ligands for the Mn4-Ca-O5 cluster of the oxygen-evolving complex (OEC). There is also a Cl(-1) ion associated with D1 and D2, which is required for oxygen evolution. The PSII complex binds additional chlorophylls, carotenoids and specific lipids. as a cofactor. Post-translationally, tyr-157 forms a radical intermediate that is referred to as redox-active TyrZ, YZ or Y-Z.

The protein localises to the plastid. The protein resides in the chloroplast thylakoid membrane. The catalysed reaction is 2 a plastoquinone + 4 hnu + 2 H2O = 2 a plastoquinol + O2. In terms of biological role, photosystem II (PSII) is a light-driven water:plastoquinone oxidoreductase that uses light energy to abstract electrons from H(2)O, generating O(2) and a proton gradient subsequently used for ATP formation. It consists of a core antenna complex that captures photons, and an electron transfer chain that converts photonic excitation into a charge separation. The D1/D2 (PsbA/PsbD) reaction center heterodimer binds P680, the primary electron donor of PSII as well as several subsequent electron acceptors. The chain is Photosystem II protein D1 from Amphidinium carterae (Dinoflagellate).